Consider the following 883-residue polypeptide: MSKELSPKYNPAEVEAGRYQKWLDEDVFKPSGDKKAKPYSIVIPPPNVTGKLHLGHAWDTTLQDIIIRQKRMQGFDTLWLPGMDHAGIATQAKVEARLAESGISRYDLGREKFLDKVWEWKDEYAATIKEQWGKMGLSVDYSRERFTLDEGLSKAVRKVFVELYKKGWIYRGEFIINWDPKARTALSDIEVIHKDVEGAFYHMNYMLEDGSRALEVATTRPETMFGDTAVAVNPNDDRYKDLIGKNVILPILNKPIPIVGDEHADPEFGTGVVKITPAHDPNDFLVGQRHNLPQVNVMNDDGTMNELAGEFNGMDRFEARKAVVKKLEEIGALVEIEKMTHSVGHSERTGVPVEPRLSTQWFVKMDQLAKNAIANQDTDDKVDFYPPRFNDTFLQWMENVHDWVISRQLWWGHQIPAWYNAEGEIYVGEEAPEGDGWKQDEDVLDTWFSSALWPFSTMGWPDVDSEDFKRYFPTSTLVTGYDIIFFWVSRMIFQSLEFTGRQPFKNVLIHGLIRDEQGRKMSKSLGNGIDPMDVIEKYGADALRWFLSNGSAPGQDVRFSYEKMDASWNFINKIWNISRYILMNNEGLTLDVARENVAKVAAGQAGNVTDRWILHNLNETIGKVTENFDKFEFGVAGHILYNFIWDEFADWYVELTKEVLYSDNEDEKVITRSVLLYTLDQILRLLHPIMPFVTEEIFGQISEGSIVTAEYPVVCPEFENEEAAAGVEALKDVIRSVRNSRAEVNVAPSKPITILIKTSDSKLDAFFNDNINYIKRFTNPEHLEIAADVEVPDLVMSSIITGAEIYLPLADLLNVEEELARLEKELAKWQKELDMVGKKLSNERFVANAKPEVVQKERDKQKDYQAKYDAIVVRIDEMKKLVK.

The 'HIGH' region motif lies at Pro-46–His-56. Positions Lys-520–Ser-524 match the 'KMSKS' region motif. Lys-523 is an ATP binding site. The stretch at Leu-809 to Arg-844 forms a coiled coil.

This sequence belongs to the class-I aminoacyl-tRNA synthetase family. ValS type 1 subfamily. Monomer.

The protein localises to the cytoplasm. The enzyme catalyses tRNA(Val) + L-valine + ATP = L-valyl-tRNA(Val) + AMP + diphosphate. In terms of biological role, catalyzes the attachment of valine to tRNA(Val). As ValRS can inadvertently accommodate and process structurally similar amino acids such as threonine, to avoid such errors, it has a 'posttransfer' editing activity that hydrolyzes mischarged Thr-tRNA(Val) in a tRNA-dependent manner. The chain is Valine--tRNA ligase from Streptococcus thermophilus (strain CNRZ 1066).